The following is an 880-amino-acid chain: Tyrosine-protein kinase receptor TYRO3 (880 aa).

The signal sequence occupies residues 1–30 (MALRRSMGWPGLRPLLLAGLASLLLPGSAA). 2 consecutive Ig-like C2-type domains span residues 31-118 (AGLK…TKIS) and 129-209 (PFFT…PAIV). Residues 31-419 (AGLKLMGAPV…QGPPHSRTSW (389 aa)) are Extracellular-facing. Residues Asn53, Asn75, Asn181, Asn220, Asn230, Asn283, Asn356, and Asn370 are each glycosylated (N-linked (GlcNAc...) asparagine). Intrachain disulfides connect Cys54/Cys107 and Cys150/Cys193. 2 Fibronectin type-III domains span residues 217 to 310 (APFN…TKGL) and 315 to 406 (APQN…SHDH). A helical transmembrane segment spans residues 420–440 (VPVVLGVLTALITAAALALIL). Residues 441 to 880 (LRKRRKETRF…QQGLLPHSSC (440 aa)) lie on the Cytoplasmic side of the membrane. Ser456 carries the phosphoserine modification. One can recognise a Protein kinase domain in the interval 508 to 785 (FTLGRMLGKG…LENILGHLSV (278 aa)). ATP is bound by residues 514 to 522 (LGKGEFGSV) and Lys540. Catalysis depends on Asp645, which acts as the Proton acceptor. Phosphotyrosine; by autocatalysis is present on residues Tyr671, Tyr675, Tyr676, and Tyr794. The tract at residues 800-864 (AEQPTESGSP…QQPESPLNEN (65 aa)) is disordered. Ser808 and Ser859 each carry phosphoserine. Residues 849-864 (SPGQLEQQPESPLNEN) are compositionally biased toward polar residues.

It belongs to the protein kinase superfamily. Tyr protein kinase family. AXL/UFO subfamily. As to quaternary structure, monomer and homodimer. Interacts (via N-terminus) with extracellular ligands TULP1 and GAS6. Interacts with PIK3R1; this interaction increases PI3-kinase activity. Autophosphorylated. In terms of tissue distribution, abundant in the brain and lower levels in other tissues.

It localises to the cell membrane. The catalysed reaction is L-tyrosyl-[protein] + ATP = O-phospho-L-tyrosyl-[protein] + ADP + H(+). Its function is as follows. Receptor tyrosine kinase that transduces signals from the extracellular matrix into the cytoplasm by binding to several ligands including TULP1 or GAS6. Regulates many physiological processes including cell survival, migration and differentiation. Ligand binding at the cell surface induces dimerization and autophosphorylation of TYRO3 on its intracellular domain that provides docking sites for downstream signaling molecules. Following activation by ligand, interacts with PIK3R1 and thereby enhances PI3-kinase activity. Activates the AKT survival pathway, including nuclear translocation of NF-kappa-B and up-regulation of transcription of NF-kappa-B-regulated genes. TYRO3 signaling plays a role in various processes such as neuron protection from excitotoxic injury, platelet aggregation and cytoskeleton reorganization. Also plays an important role in inhibition of Toll-like receptors (TLRs)-mediated innate immune response by activating STAT1, which selectively induces production of suppressors of cytokine signaling SOCS1 and SOCS3. In Mus musculus (Mouse), this protein is Tyrosine-protein kinase receptor TYRO3 (Tyro3).